The sequence spans 270 residues: Small ribosomal subunit protein eS1 (270 aa).

Disordered stretches follow at residues 1-20 and 238-270; these read MAVG…SKKK and GGGK…QESV.

Belongs to the eukaryotic ribosomal protein eS1 family. As to quaternary structure, component of the small ribosomal subunit. Mature ribosomes consist of a small (40S) and a large (60S) subunit. The 40S subunit contains about 33 different proteins and 1 molecule of RNA (18S). The 60S subunit contains about 49 different proteins and 3 molecules of RNA (28S, 5.8S and 5S).

The protein localises to the cytoplasm. This is Small ribosomal subunit protein eS1 from Culex quinquefasciatus (Southern house mosquito).